The chain runs to 294 residues: uncharacterized protein (294 aa).

The tract at residues 1 to 215 (MTTAITPDKK…DQDDDDQKDL (215 aa)) is disordered. Composition is skewed to basic residues over residues 27–43 (TKPR…KSKK) and 50–78 (AKKR…KKAP). Residues 79-88 (MKAPSKPAAK) show a composition bias toward low complexity. The segment covering 92-102 (QQAQASLQKPI) has biased composition (polar residues). Positions 118–136 (PRPPTPIPPTGVKPEPAPR) are enriched in pro residues. A compositionally biased stretch (low complexity) spans 145–160 (SVSSTTPRTSATTGTT).

This is an uncharacterized protein from Caenorhabditis elegans.